The chain runs to 306 residues: UDP-3-O-acyl-N-acetylglucosamine deacetylase (306 aa).

The Zn(2+) site is built by histidine 79, histidine 239, and aspartate 243. Residue histidine 266 is the Proton donor of the active site.

Belongs to the LpxC family. The cofactor is Zn(2+).

The enzyme catalyses a UDP-3-O-[(3R)-3-hydroxyacyl]-N-acetyl-alpha-D-glucosamine + H2O = a UDP-3-O-[(3R)-3-hydroxyacyl]-alpha-D-glucosamine + acetate. The protein operates within glycolipid biosynthesis; lipid IV(A) biosynthesis; lipid IV(A) from (3R)-3-hydroxytetradecanoyl-[acyl-carrier-protein] and UDP-N-acetyl-alpha-D-glucosamine: step 2/6. Its function is as follows. Catalyzes the hydrolysis of UDP-3-O-myristoyl-N-acetylglucosamine to form UDP-3-O-myristoylglucosamine and acetate, the committed step in lipid A biosynthesis. The chain is UDP-3-O-acyl-N-acetylglucosamine deacetylase from Actinobacillus pleuropneumoniae serotype 7 (strain AP76).